Consider the following 284-residue polypeptide: Probable endonuclease 4 (284 aa).

Zn(2+)-binding residues include H69, H109, E145, D179, H182, H216, D229, H231, and E261.

This sequence belongs to the AP endonuclease 2 family. Zn(2+) serves as cofactor.

The enzyme catalyses Endonucleolytic cleavage to 5'-phosphooligonucleotide end-products.. Its function is as follows. Endonuclease IV plays a role in DNA repair. It cleaves phosphodiester bonds at apurinic or apyrimidinic (AP) sites, generating a 3'-hydroxyl group and a 5'-terminal sugar phosphate. This is Probable endonuclease 4 from Chlorobium phaeobacteroides (strain BS1).